A 311-amino-acid polypeptide reads, in one-letter code: Malate dehydrogenase (311 aa).

Residues 7–13 and Asp-34 each bind NAD(+); that span reads GAAGGIG. Positions 81 and 87 each coordinate substrate. NAD(+) is bound by residues Asn-94 and 117–119; that span reads ITN. The substrate site is built by Asn-119 and Arg-153. His-177 functions as the Proton acceptor in the catalytic mechanism. Met-227 is a binding site for NAD(+).

Belongs to the LDH/MDH superfamily. MDH type 1 family. In terms of assembly, homodimer.

It carries out the reaction (S)-malate + NAD(+) = oxaloacetate + NADH + H(+). In terms of biological role, catalyzes the reversible oxidation of malate to oxaloacetate. The protein is Malate dehydrogenase (mdh) of Vibrio cholerae serotype O1 (strain ATCC 39315 / El Tor Inaba N16961).